Consider the following 352-residue polypeptide: MTHISERLLVQAHLAAKQPRVLSEQESAEHRAAIAAELKAQNAVLVAHYYCDPVIQALAEETGGCVSDSLEMARFGNQHPAQTVVVAGVRFMGETAKILNPEKRVLMPTLEATCSLDLGCPVDEFSAFCDQHPERTVVVYANTSAAVKARADWVVTSSCAVEIVEHLMDNGEPILWAPDQHLGRYIQRETGADMLLWDGACIVHEEFKAKQLEDMKALYPDAAILVHPESPESVVALADAVGSTSQLIKAAQTLPNKTFIVATDRGIFYKMQQLCPDKDFIEAPTAGNGAACRSCAHCPWMAMNTLERTLACLREGSGEIFVDPALIPRAVRPLKRMLDFTQAARLRQAGNA.

2 residues coordinate iminosuccinate: histidine 48 and serine 69. Position 114 (cysteine 114) interacts with [4Fe-4S] cluster. Iminosuccinate is bound by residues tyrosine 140–asparagine 142 and serine 157. Cysteine 201 lines the [4Fe-4S] cluster pocket. Residues histidine 227–glutamate 229 and threonine 244 contribute to the iminosuccinate site. Cysteine 298 contributes to the [4Fe-4S] cluster binding site.

Belongs to the quinolinate synthase family. Type 1 subfamily. Requires [4Fe-4S] cluster as cofactor.

Its subcellular location is the cytoplasm. It catalyses the reaction iminosuccinate + dihydroxyacetone phosphate = quinolinate + phosphate + 2 H2O + H(+). It functions in the pathway cofactor biosynthesis; NAD(+) biosynthesis; quinolinate from iminoaspartate: step 1/1. Functionally, catalyzes the condensation of iminoaspartate with dihydroxyacetone phosphate to form quinolinate. In Pseudomonas aeruginosa (strain UCBPP-PA14), this protein is Quinolinate synthase.